Here is a 640-residue protein sequence, read N- to C-terminus: G protein-coupled receptor kinase 1 (640 aa).

Residues 1 to 201 are N-terminal; sequence MEIENIVANT…LEKRPVDKHT (201 aa). Residues 52–187 enclose the RGS domain; the sequence is YAFVVEKQPI…IQTMYFHRFL (136 aa). Positions 202–469 constitute a Protein kinase domain; that stretch reads FRLYRVLGKG…AEEIRAHPFF (268 aa). ATP is bound by residues 208–216 and Lys231; that span reads LGKGGFGEV. The Proton acceptor role is filled by Asp327. In terms of domain architecture, AGC-kinase C-terminal spans 479–544; it reads EPVPWKKMEA…GCVSIPWQSE (66 aa). The disordered stretch occupies residues 610–640; sequence GVDQQQPSTSAKPAAVRSSRAASASGRTSMI. Residues 619–640 show a composition bias toward low complexity; the sequence is SAKPAAVRSSRAASASGRTSMI.

The protein belongs to the protein kinase superfamily. AGC Ser/Thr protein kinase family. GPRK subfamily.

The enzyme catalyses [G-protein-coupled receptor] + ATP = [G-protein-coupled receptor]-phosphate + ADP + H(+). Functionally, specifically phosphorylates the activated forms of G protein-coupled receptors. In Caenorhabditis briggsae, this protein is G protein-coupled receptor kinase 1 (grk-1).